We begin with the raw amino-acid sequence, 895 residues long: Splicing factor 3B subunit 2 (895 aa).

Residues 1 to 10 show a composition bias toward basic and acidic residues; that stretch reads MATEHPEPPK. Disordered regions lie at residues 1–24, 65–136, 197–373, and 400–453; these read MATE…PGHY, LNRP…LRVG, AKMG…EYVT, and KKEK…SKKK. A Glycyl lysine isopeptide (Lys-Gly) (interchain with G-Cter in SUMO2) cross-link involves residue Lys-10. One can recognise an SAP domain in the interval 24 to 58; sequence YGAWAAQELQAKLAEIGAPIQGNREELVERLQSYT. Composition is skewed to pro residues over residues 90–114 and 122–133; these read IPMP…PPPG and AHPPNLGPPPPL. Residues 140–199 are a coiled coil; sequence ALSEEERLKLAQQQAALLMQQEERAKQQGDHSLKEHELLEQQKRAAVLLEQERQQEIAKM. Over residues 218–238 the composition is skewed to low complexity; it reads PLGPRVAAPVGPVGPTPTVLP. Omega-N-methylarginine occurs at positions 222, 245, and 247. Pro residues predominate over residues 241-254; sequence APVPRPRGPPPPPG. Residue Lys-275 is modified to N6-acetyllysine. Basic and acidic residues predominate over residues 277–286; sequence LQLKESRQEE. A Glycyl lysine isopeptide (Lys-Gly) (interchain with G-Cter in SUMO2) cross-link involves residue Lys-280. At Ser-289 the chain carries Phosphoserine. Phosphothreonine is present on Thr-298. 2 positions are modified to phosphoserine: Ser-307 and Ser-309. Thr-311 is subject to Phosphothreonine. Phosphoserine is present on Ser-317. Over residues 322–338 the composition is skewed to basic residues; it reads EKNRKRRNRKKKKKPQR. Over residues 347 to 359 the composition is skewed to basic and acidic residues; sequence SGDREKDSTRSRG. Ser-360 and Ser-362 each carry phosphoserine. Residues Lys-400 and Lys-412 each participate in a glycyl lysine isopeptide (Lys-Gly) (interchain with G-Cter in SUMO2) cross-link. Composition is skewed to basic and acidic residues over residues 400–414 and 422–431; these read KKEK…DKLE and KGFEEEHKDS. The interval 401–550 is required for interaction with PRMT9; the sequence is KEKEKEPEKL…QEKEEQKTMK (150 aa). Residues Ser-431, Ser-435, and Ser-436 each carry the phosphoserine modification. Residue Lys-492 forms a Glycyl lysine isopeptide (Lys-Gly) (interchain with G-Cter in SUMO2) linkage. Arg-508 is modified (omega-N-methylarginine; by PRMT9; alternate). A Symmetric dimethylarginine; by PRMT9; alternate modification is found at Arg-508. At Arg-515 the chain carries Omega-N-methylarginine. Lys-543 is covalently cross-linked (Glycyl lysine isopeptide (Lys-Gly) (interchain with G-Cter in SUMO2)). The disordered stretch occupies residues 691 to 757; the sequence is AAEFQTKTEE…PGGFSSVPAG (67 aa). Positions 712–732 are enriched in acidic residues; it reads EPSDEESSEEEEEEESDEDKP. Residue Lys-770 forms a Glycyl lysine isopeptide (Lys-Gly) (interchain with G-Cter in SUMO2) linkage. Residue Thr-780 is modified to Phosphothreonine. Glycyl lysine isopeptide (Lys-Gly) (interchain with G-Cter in SUMO2) cross-links involve residues Lys-790, Lys-843, and Lys-857. Basic and acidic residues predominate over residues 844 to 869; sequence YEEHVREQQAQVEKEDFSDMVAEHAA. The tract at residues 844–895 is disordered; that stretch reads YEEHVREQQAQVEKEDFSDMVAEHAAKQKQKKRKAQPQDSRGGSKKYKEFKF. Position 861 is a phosphoserine (Ser-861).

Component of the 17S U2 SnRNP complex, a ribonucleoprotein complex that contains small nuclear RNA (snRNA) U2 and a number of specific proteins. Part of the SF3B subcomplex of the 17S U2 SnRNP complex. SF3B associates with the splicing subcomplex SF3A and a 12S RNA unit to form the U2 small nuclear ribonucleoproteins complex (U2 snRNP). Within the SF3B complex, interacts directly with SF3B4. Found in a complex with PRMT9, SF3B2 and SF3B4. Interacts (Arg-508-methylated form) with SMN1 (via Tudor domain). Interacts with RBM7. Interacts with ERCC6. Component of the minor spliceosome. Within this complex, interacts with SCNM1 and CRIPT. In terms of assembly, (Microbial infection) Interacts with HIV-1 Vpr. Post-translationally, methylation at Arg-508 by PRMT9 is required for the interaction with SMN1.

The protein resides in the nucleus. The protein localises to the nucleus speckle. Its function is as follows. Component of the 17S U2 SnRNP complex of the spliceosome, a large ribonucleoprotein complex that removes introns from transcribed pre-mRNAs. The 17S U2 SnRNP complex (1) directly participates in early spliceosome assembly and (2) mediates recognition of the intron branch site during pre-mRNA splicing by promoting the selection of the pre-mRNA branch-site adenosine, the nucleophile for the first step of splicing. Within the 17S U2 SnRNP complex, SF3B2 is part of the SF3B subcomplex, which is required for 'A' complex assembly formed by the stable binding of U2 snRNP to the branchpoint sequence in pre-mRNA. Sequence independent binding of SF3A and SF3B subcomplexes upstream of the branch site is essential, it may anchor U2 snRNP to the pre-mRNA. May also be involved in the assembly of the 'E' complex. Also acts as a component of the minor spliceosome, which is involved in the splicing of U12-type introns in pre-mRNAs. The polypeptide is Splicing factor 3B subunit 2 (SF3B2) (Homo sapiens (Human)).